Here is a 240-residue protein sequence, read N- to C-terminus: Probable peptide export permease protein YydJ (240 aa).

The next 6 helical transmembrane spans lie at 13-33 (VIII…FLLV), 50-70 (SYTV…AFFI), 97-117 (IAVL…IISL), 126-146 (ALLL…IGTI), 153-173 (ILIS…LVAI), and 210-230 (VLFI…VLRF).

The complex is composed of 2 ATP-binding proteins (YydI), two transmembrane proteins (YydJ).

The protein localises to the cell membrane. Its function is as follows. Suggested to be part of an ABC transporter complex YydIJ involved in export of the modified peptide YydF. The protein is Probable peptide export permease protein YydJ (yydJ) of Bacillus subtilis (strain 168).